The sequence spans 801 residues: Phenylalanine--tRNA ligase beta subunit (801 aa).

A tRNA-binding domain is found at 39–153 (AEGLSKLVVG…EGAIPGDSIF (115 aa)). The B5 domain maps to 406–481 (TEPVEVSTTL…RIYGYEKLPT (76 aa)). Residues aspartate 459, aspartate 465, glutamate 468, and glutamate 469 each coordinate Mg(2+). The FDX-ACB domain maps to 708–801 (TKYPSVSRDI…LVEKVNAEIR (94 aa)).

Belongs to the phenylalanyl-tRNA synthetase beta subunit family. Type 1 subfamily. Tetramer of two alpha and two beta subunits. Mg(2+) serves as cofactor.

The protein resides in the cytoplasm. The catalysed reaction is tRNA(Phe) + L-phenylalanine + ATP = L-phenylalanyl-tRNA(Phe) + AMP + diphosphate + H(+). This is Phenylalanine--tRNA ligase beta subunit from Streptococcus agalactiae serotype V (strain ATCC BAA-611 / 2603 V/R).